The sequence spans 498 residues: ATP synthase subunit alpha, chloroplastic (498 aa).

170–177 provides a ligand contact to ATP; sequence GDRQTGKT.

Belongs to the ATPase alpha/beta chains family. F-type ATPases have 2 components, CF(1) - the catalytic core - and CF(0) - the membrane proton channel. CF(1) has five subunits: alpha(3), beta(3), gamma(1), delta(1), epsilon(1). CF(0) has four main subunits: a, b, b' and c.

It is found in the plastid. It localises to the chloroplast thylakoid membrane. The enzyme catalyses ATP + H2O + 4 H(+)(in) = ADP + phosphate + 5 H(+)(out). In terms of biological role, produces ATP from ADP in the presence of a proton gradient across the membrane. The alpha chain is a regulatory subunit. This chain is ATP synthase subunit alpha, chloroplastic, found in Oltmannsiellopsis viridis (Marine flagellate).